A 928-amino-acid chain; its full sequence is ATP-dependent DNA helicase PIF5 (928 aa).

A mitochondrion-targeting transit peptide spans methionine 1–serine 49. Disordered stretches follow at residues arginine 29 to isoleucine 141 and leucine 176 to alanine 231. Positions alanine 52 to glycine 61 are enriched in basic and acidic residues. Glycine 264–serine 271 contacts ATP. Disordered stretches follow at residues proline 389 to lysine 421, lysine 481 to glutamate 513, isoleucine 545 to methionine 572, and serine 585 to tryptophan 607. Residues asparagine 550–valine 566 are compositionally biased toward polar residues. A DNA-binding region spans residues glutamine 858–phenylalanine 877. Residues glutamate 898–glutamate 928 form a disordered region.

It belongs to the helicase family. PIF1 subfamily. In terms of assembly, monomer. Mg(2+) serves as cofactor.

Its subcellular location is the mitochondrion. It catalyses the reaction Couples ATP hydrolysis with the unwinding of duplex DNA at the replication fork by translocating in the 5'-3' direction. This creates two antiparallel DNA single strands (ssDNA). The leading ssDNA polymer is the template for DNA polymerase III holoenzyme which synthesizes a continuous strand.. It carries out the reaction ATP + H2O = ADP + phosphate + H(+). Functionally, DNA-dependent ATPase and 5'-3' DNA helicase required for the maintenance of mitochondrial (kinetoplast) genome stability. Involved in processing of minicircle Okazaki fragments. The chain is ATP-dependent DNA helicase PIF5 from Trypanosoma brucei brucei (strain 927/4 GUTat10.1).